We begin with the raw amino-acid sequence, 129 residues long: MNSLTGFMCCALLLISPLCMGYTDEDREADSRKVAEIIRNSQDDDSKINSTQELLDIYRRLYPSLTLEDRESIDKFVNEHTDAILIDGVPSQGGRKTKYVGKVLSPAAKGFAIGFFEELGSKIAQLFTG.

An N-terminal signal peptide occupies residues 1–21 (MNSLTGFMCCALLLISPLCMG). Asn49 is a glycosylation site (N-linked (GlcNAc...) asparagine).

This sequence belongs to the Turandot family.

The protein resides in the secreted. Functionally, a humoral factor that plays a role in stress tolerance; gives increased resistance to the lethal effects of bacterial challenge and stress. Regulated by the JAK/STAT pathway and NF-KB-like Relish pathway in the fat body, upd3 in the hemocytes and Mekk1 in response to septic injury and consequent immune response. This is Protein Turandot A (TotA) from Drosophila yakuba (Fruit fly).